A 413-amino-acid polypeptide reads, in one-letter code: Cardiolipin synthase B (413 aa).

2 consecutive PLD phosphodiesterase domains span residues Ile108–His135 and Arg285–Ser312. Catalysis depends on residues His113, Lys115, Asp120, His290, Lys292, and Asp297. Residues Ala388–Pro413 are disordered.

Belongs to the phospholipase D family. Cardiolipin synthase subfamily. ClsB sub-subfamily.

It is found in the cell membrane. It carries out the reaction 2 a 1,2-diacyl-sn-glycero-3-phospho-(1'-sn-glycerol) = a cardiolipin + glycerol. In terms of biological role, catalyzes the phosphatidyl group transfer from one phosphatidylglycerol molecule to another to form cardiolipin (CL) (diphosphatidylglycerol) and glycerol. The chain is Cardiolipin synthase B from Salmonella typhi.